Reading from the N-terminus, the 103-residue chain is Carboxysome shell protein CcmK3 (103 aa).

The 88-residue stretch at 4 to 91 folds into the BMC domain; it reads AVGVIQTLGF…PPENVLAVLP (88 aa).

Belongs to the bacterial microcompartments protein family. CcmK subfamily. Forms mixed heterohexamers with CcmK4, probably with 1:5 CcmK3:CcmK4 stoichiometry. Only very weak interactions with CcmK1 and CcmK2 were seen. Bulky residues in the pore region probably preclude the formation of homohexamers by this subunit.

It is found in the carboxysome. Functionally, a probably minor shell protein component of the carboxysome, a polyhedral inclusion where RuBisCO (ribulose bisphosphate carboxylase, rbcL-rbcS) is sequestered. This subunit probably does not form homohexamers. This chain is Carboxysome shell protein CcmK3, found in Synechocystis sp. (strain ATCC 27184 / PCC 6803 / Kazusa).